Consider the following 397-residue polypeptide: Acetate kinase (397 aa).

Asn-8 provides a ligand contact to Mg(2+). An ATP-binding site is contributed by Lys-15. Arg-89 provides a ligand contact to substrate. The active-site Proton donor/acceptor is the Asp-146. Residues 206–210, 281–283, and 329–333 each bind ATP; these read HLGNG, DLR, and GIGEN. Residue Glu-382 participates in Mg(2+) binding.

Belongs to the acetokinase family. Homodimer. Requires Mg(2+) as cofactor. Mn(2+) is required as a cofactor.

It localises to the cytoplasm. The enzyme catalyses acetate + ATP = acetyl phosphate + ADP. Its pathway is metabolic intermediate biosynthesis; acetyl-CoA biosynthesis; acetyl-CoA from acetate: step 1/2. Functionally, catalyzes the formation of acetyl phosphate from acetate and ATP. Can also catalyze the reverse reaction. This chain is Acetate kinase, found in Anoxybacillus flavithermus (strain DSM 21510 / WK1).